The chain runs to 315 residues: FGFR1 oncogene partner 2 homolog (315 aa).

Coiled coils occupy residues 32 to 99 and 156 to 183; these read EEAE…RAME and VVQRELQTISQLRLENETLRELLQISKQ. Disordered stretches follow at residues 201 to 222 and 238 to 315; these read KAVQTDSTADDSADDLSISGAS and PEQP…APAT. The segment covering 246–269 has biased composition (polar residues); that stretch reads GTTNSFNTAPVHSQSETQAPSVTL.

The protein belongs to the SIKE family.

This chain is FGFR1 oncogene partner 2 homolog, found in Drosophila melanogaster (Fruit fly).